Here is a 273-residue protein sequence, read N- to C-terminus: Ribosomal RNA small subunit methyltransferase A (273 aa).

Positions 18, 20, 45, 66, 91, and 113 each coordinate S-adenosyl-L-methionine.

This sequence belongs to the class I-like SAM-binding methyltransferase superfamily. rRNA adenine N(6)-methyltransferase family. RsmA subfamily.

The protein localises to the cytoplasm. The catalysed reaction is adenosine(1518)/adenosine(1519) in 16S rRNA + 4 S-adenosyl-L-methionine = N(6)-dimethyladenosine(1518)/N(6)-dimethyladenosine(1519) in 16S rRNA + 4 S-adenosyl-L-homocysteine + 4 H(+). Specifically dimethylates two adjacent adenosines (A1518 and A1519) in the loop of a conserved hairpin near the 3'-end of 16S rRNA in the 30S particle. May play a critical role in biogenesis of 30S subunits. The polypeptide is Ribosomal RNA small subunit methyltransferase A (Shigella boydii serotype 4 (strain Sb227)).